Reading from the N-terminus, the 154-residue chain is Transcriptional repressor NrdR (154 aa).

The interval M1–G22 is disordered. A zinc finger lies at C3–C34. Over residues A7–G22 the composition is skewed to basic and acidic residues. One can recognise an ATP-cone domain in the interval M49–D139.

The protein belongs to the NrdR family. Zn(2+) serves as cofactor.

Negatively regulates transcription of bacterial ribonucleotide reductase nrd genes and operons by binding to NrdR-boxes. The protein is Transcriptional repressor NrdR of Rhizorhabdus wittichii (strain DSM 6014 / CCUG 31198 / JCM 15750 / NBRC 105917 / EY 4224 / RW1) (Sphingomonas wittichii).